Here is a 570-residue protein sequence, read N- to C-terminus: Phosphoribosylaminoimidazole carboxylase (570 aa).

The ATP-grasp domain maps to 110-297 (KQHLVKNRIP…QFEAHLRAIL (188 aa)). ATP is bound at residue 137–192 (GSSLGYPFVLKSRTLAYDGRGNFVVKSEEDIEKGLEFLANRPLYAEKWASFKKELS).

The protein in the C-terminal section; belongs to the AIR carboxylase family. Class I subfamily.

The catalysed reaction is 5-amino-1-(5-phospho-D-ribosyl)imidazole-4-carboxylate + H(+) = 5-amino-1-(5-phospho-beta-D-ribosyl)imidazole + CO2. It functions in the pathway purine metabolism; IMP biosynthesis via de novo pathway; 5-amino-1-(5-phospho-D-ribosyl)imidazole-4-carboxylate from 5-amino-1-(5-phospho-D-ribosyl)imidazole (carboxylase route): step 1/1. This chain is Phosphoribosylaminoimidazole carboxylase (ADE2), found in Candida glabrata (strain ATCC 2001 / BCRC 20586 / JCM 3761 / NBRC 0622 / NRRL Y-65 / CBS 138) (Yeast).